We begin with the raw amino-acid sequence, 130 residues long: Cuticle protein 14 isoform a (130 aa).

The Chitin-binding type R&amp;R domain maps to 24–90 (IGNYNFGYNE…NVHTNEPGTD (67 aa)).

In Limulus polyphemus (Atlantic horseshoe crab), this protein is Cuticle protein 14 isoform a.